Consider the following 512-residue polypeptide: Cytochrome P450 72A13 (512 aa).

A helical membrane pass occupies residues 2–22 (EISVASVTVSVAVVVVSWWVW). C460 is a binding site for heme.

This sequence belongs to the cytochrome P450 family. It depends on heme as a cofactor.

The protein resides in the membrane. This chain is Cytochrome P450 72A13 (CYP72A13), found in Arabidopsis thaliana (Mouse-ear cress).